Reading from the N-terminus, the 882-residue chain is Liprin-beta-2 (882 aa).

Residues 101–303 (AASNETYQER…DKDRRIEELT (203 aa)) adopt a coiled-coil conformation. Serine 328, serine 362, and serine 386 each carry phosphoserine. The segment at 339–554 (RKWNTTNKSP…SRTRDTKGQK (216 aa)) is disordered. Residues 388 to 399 (EDLRRESGDKCV) are compositionally biased toward basic and acidic residues. 2 stretches are compositionally biased toward polar residues: residues 442 to 457 (PTASLQPDSSGSSQPK) and 481 to 495 (SSASSGTESSPQSPV). Phosphoserine is present on residues serine 502 and serine 518. Residues 502–515 (SPKGIKKFWGKIRR) are compositionally biased toward basic residues. SAM domains follow at residues 564–628 (WSTE…INAK), 636–699 (LDHI…LHVN), and 724–789 (WSNH…KFNA).

It belongs to the liprin family. Liprin-beta subfamily. Forms homodimers and heterodimers. Expressed widely. Strong expression in liver, kidney, intestine, heart, lung and testis. Low expression in brain and thymus.

In terms of biological role, may regulate the disassembly of focal adhesions. Did not bind receptor-like tyrosine phosphatases type 2A. This is Liprin-beta-2 (Ppfibp2) from Mus musculus (Mouse).